The chain runs to 453 residues: Homogentisate 1,2-dioxygenase (453 aa).

His-306 (proton acceptor) is an active-site residue. 2 residues coordinate Fe cation: His-349 and Glu-355. Residues Tyr-364 and His-385 each contribute to the homogentisate site. His-385 contributes to the Fe cation binding site.

It belongs to the homogentisate dioxygenase family. As to quaternary structure, hexamer; dimer of trimers. Requires Fe cation as cofactor.

The catalysed reaction is homogentisate + O2 = 4-maleylacetoacetate + H(+). Its pathway is amino-acid degradation; L-phenylalanine degradation; acetoacetate and fumarate from L-phenylalanine: step 4/6. Its function is as follows. Involved in the catabolism of homogentisate (2,5-dihydroxyphenylacetate or 2,5-OH-PhAc), a central intermediate in the degradation of phenylalanine and tyrosine. Catalyzes the oxidative ring cleavage of the aromatic ring of homogentisate to yield maleylacetoacetate. The chain is Homogentisate 1,2-dioxygenase from Rhizobium rhizogenes (strain K84 / ATCC BAA-868) (Agrobacterium radiobacter).